A 346-amino-acid polypeptide reads, in one-letter code: Protein RecA (346 aa).

79–86 (GPESSGKT) serves as a coordination point for ATP.

This sequence belongs to the RecA family.

It localises to the cytoplasm. Can catalyze the hydrolysis of ATP in the presence of single-stranded DNA, the ATP-dependent uptake of single-stranded DNA by duplex DNA, and the ATP-dependent hybridization of homologous single-stranded DNAs. It interacts with LexA causing its activation and leading to its autocatalytic cleavage. This is Protein RecA from Chlorobaculum tepidum (strain ATCC 49652 / DSM 12025 / NBRC 103806 / TLS) (Chlorobium tepidum).